Consider the following 331-residue polypeptide: Hyaluronidase (331 aa).

Cystine bridges form between C19–C308 and C185–C197. A glycan (N-linked (GlcNAc...) asparagine) is linked at N79. Residue E109 is the Proton donor of the active site. An N-linked (GlcNAc...) asparagine glycan is attached at N325.

This sequence belongs to the glycosyl hydrolase 56 family. In terms of tissue distribution, expressed by the venom gland.

The protein resides in the secreted. The catalysed reaction is Random hydrolysis of (1-&gt;4)-linkages between N-acetyl-beta-D-glucosamine and D-glucuronate residues in hyaluronate.. Functionally, hydrolyzes high molecular weight hyaluronic acid to produce small oligosaccharides. The protein is Hyaluronidase of Dolichovespula maculata (Bald-faced hornet).